A 313-amino-acid chain; its full sequence is Acetyl-coenzyme A carboxylase carboxyl transferase subunit alpha (313 aa).

One can recognise a CoA carboxyltransferase C-terminal domain in the interval 42–292 (KSDKLLRDTY…GAAIGEELDK (251 aa)).

It belongs to the AccA family. In terms of assembly, acetyl-CoA carboxylase is a heterohexamer composed of biotin carboxyl carrier protein (AccB), biotin carboxylase (AccC) and two subunits each of ACCase subunit alpha (AccA) and ACCase subunit beta (AccD).

It localises to the cytoplasm. It carries out the reaction N(6)-carboxybiotinyl-L-lysyl-[protein] + acetyl-CoA = N(6)-biotinyl-L-lysyl-[protein] + malonyl-CoA. It participates in lipid metabolism; malonyl-CoA biosynthesis; malonyl-CoA from acetyl-CoA: step 1/1. In terms of biological role, component of the acetyl coenzyme A carboxylase (ACC) complex. First, biotin carboxylase catalyzes the carboxylation of biotin on its carrier protein (BCCP) and then the CO(2) group is transferred by the carboxyltransferase to acetyl-CoA to form malonyl-CoA. The chain is Acetyl-coenzyme A carboxylase carboxyl transferase subunit alpha from Rhizorhabdus wittichii (strain DSM 6014 / CCUG 31198 / JCM 15750 / NBRC 105917 / EY 4224 / RW1) (Sphingomonas wittichii).